The following is a 256-amino-acid chain: MASKDVEEGVEGPICWICREEVGNEGIHPCACTGELDVVHPQCLSTWLTVSRNTACQMCRVIYRTRTQWRSRLNLWPEMERQEIFELFLLMSVVVAGLVGVALCTWTLLVILTAPAGTFSPGAVLGFLCFFGFYQIFIVFAFGGICRVSGTVRALYAANNTRVTVLPYRRPRRPTANEDNIELTVLVGPAGGTDEEPTDESSEGDVASGDKERDGSSGDEPDGGPNDRAGLRGTARTDLCAPTKKPVRKNHPKNNG.

The Cytoplasmic segment spans residues 1-83 (MASKDVEEGV…NLWPEMERQE (83 aa)). Residues 7 to 66 (EEGVEGPICWICREEVGNEGIHPCACTGELDVVHPQCLSTWLTVSRNTACQMCRVIYRTR) form an RING-CH-type zinc finger. Cysteine 15, cysteine 18, cysteine 30, cysteine 32, histidine 40, cysteine 43, cysteine 56, and cysteine 59 together coordinate Zn(2+). Residues 84–104 (IFELFLLMSVVVAGLVGVALC) form a helical membrane-spanning segment. Residues 105-124 (TWTLLVILTAPAGTFSPGAV) lie on the Extracellular side of the membrane. A helical transmembrane segment spans residues 125-145 (LGFLCFFGFYQIFIVFAFGGI). Over 146 to 256 (CRVSGTVRAL…VRKNHPKNNG (111 aa)) the chain is Cytoplasmic. The segment at 179–256 (DNIELTVLVG…VRKNHPKNNG (78 aa)) is disordered. The segment covering 193–203 (TDEEPTDESSE) has biased composition (acidic residues). Positions 245-256 (KPVRKNHPKNNG) are enriched in basic residues.

Binds human MHC-I, CD86, ICAM1 and CD1D.

Its subcellular location is the host cell membrane. The protein localises to the host endoplasmic reticulum. The catalysed reaction is S-ubiquitinyl-[E2 ubiquitin-conjugating enzyme]-L-cysteine + [acceptor protein]-L-lysine = [E2 ubiquitin-conjugating enzyme]-L-cysteine + N(6)-ubiquitinyl-[acceptor protein]-L-lysine.. Its pathway is protein modification; protein ubiquitination. Membrane-bound E3 ubiquitin ligase expressed at the immediate early stage of viral reactivation to mediate polyubiquitination of various host membrane proteins related to the immune response. Promotes ubiquitination and subsequent degradation of host MHC-I, CD86, DC-SIGN and DC-SIGNR, ICAM1 and CD1D molecules, presumably to prevent lysis of infected cells by cytotoxic T-lymphocytes and NK cell. Plays a role in the down-regulation of the host stress-induced NKG2D ligands MICA, MICB and CLEC2B, which enable immune cells expressing the NKG2D receptor to recognize and annihilate infected cells prior to viral spread. Alters monocyte metabolism and proliferation by mediating rapid internalization of cellular growth factor-binding receptor tyrosine kinases from the surface leading to increased signaling. The polypeptide is E3 ubiquitin-protein ligase MIR2 (K5) (Homo sapiens (Human)).